A 343-amino-acid polypeptide reads, in one-letter code: uncharacterized protein (343 aa).

This is an uncharacterized protein from Nostoc sp. (strain PCC 7120 / SAG 25.82 / UTEX 2576).